Reading from the N-terminus, the 250-residue chain is Eukaryotic translation initiation factor 2 subunit 2 (250 aa).

Residues 193 to 217 form a C4-type zinc finger; that stretch reads CHTCKSPETQLTKDTRLFFLQCTNC.

It belongs to the eIF-2-beta/eIF-5 family. As to quaternary structure, eukaryotic translation initiation factor 2 eIF2 is a heterotrimeric complex composed of an alpha, a beta and a gamma subunit.

The protein resides in the cytoplasm. The protein localises to the cytosol. In terms of biological role, component of the eIF2 complex that functions in the early steps of protein synthesis by forming a ternary complex with GTP and initiator tRNA. This complex binds to a 40S ribosomal subunit, followed by mRNA binding to form a 43S pre-initiation complex (43S PIC). Junction of the 60S ribosomal subunit to form the 80S initiation complex is preceded by hydrolysis of the GTP bound to eIF2 and release of an eIF2-GDP binary complex. In order for eIF2 to recycle and catalyze another round of initiation, the GDP bound to eIF2 must exchange with GTP by way of a reaction catalyzed by eIF2B. This is Eukaryotic translation initiation factor 2 subunit 2 from Caenorhabditis elegans.